The primary structure comprises 395 residues: Probable protein arginine N-methyltransferase 6.2 (395 aa).

The segment covering 1–11 (MFAGGADGGNG) has biased composition (gly residues). Positions 1–37 (MFAGGADGGNGHLPRPRRARRGGGGGGGMGSPPLGPP) are disordered. Positions 45-390 (DMAYFKAYSH…YFTRDQWYVK (346 aa)) constitute an SAM-dependent MTase PRMT-type domain. Residues H58, R67, G91, D113, and E142 each contribute to the S-adenosyl-L-methionine site. Active-site residues include E156 and E165. A disordered region spans residues 300 to 324 (KKQANQCLDGNTQDASPSNKKKKAD). A compositionally biased stretch (polar residues) spans 302 to 317 (QANQCLDGNTQDASPS).

It belongs to the class I-like SAM-binding methyltransferase superfamily. Protein arginine N-methyltransferase family. PRMT6 subfamily.

In terms of biological role, arginine methyltransferase that can both catalyze the formation of omega-N monomethylarginine (MMA) and asymmetrical dimethylarginine (aDMA). The chain is Probable protein arginine N-methyltransferase 6.2 (PRMT6.2) from Oryza sativa subsp. indica (Rice).